Here is an 87-residue protein sequence, read N- to C-terminus: Glutaredoxin (87 aa).

One can recognise a Glutaredoxin domain in the interval Met1–Ala87. Cys11 and Cys14 are disulfide-bonded.

The protein belongs to the glutaredoxin family. In terms of assembly, monomer.

It localises to the cytoplasm. In terms of biological role, has a glutathione-disulfide oxidoreductase activity in the presence of NADPH and glutathione reductase. Reduces low molecular weight disulfides and proteins. The chain is Glutaredoxin (grxA) from Haemophilus influenzae (strain ATCC 51907 / DSM 11121 / KW20 / Rd).